The following is a 244-amino-acid chain: Cell division protein ZapD (244 aa).

It belongs to the ZapD family. As to quaternary structure, interacts with FtsZ.

The protein resides in the cytoplasm. Cell division factor that enhances FtsZ-ring assembly. Directly interacts with FtsZ and promotes bundling of FtsZ protofilaments, with a reduction in FtsZ GTPase activity. The sequence is that of Cell division protein ZapD from Shewanella sp. (strain MR-4).